The following is a 615-amino-acid chain: 1-deoxy-D-xylulose-5-phosphate synthase (615 aa).

Thiamine diphosphate-binding positions include histidine 72 and 111-113; that span reads GHS. Mg(2+) is bound at residue aspartate 142. Thiamine diphosphate contacts are provided by residues 143-144, asparagine 171, tyrosine 278, and glutamate 360; that span reads GA. Asparagine 171 serves as a coordination point for Mg(2+).

The protein belongs to the transketolase family. DXPS subfamily. Homodimer. Requires Mg(2+) as cofactor. It depends on thiamine diphosphate as a cofactor.

The enzyme catalyses D-glyceraldehyde 3-phosphate + pyruvate + H(+) = 1-deoxy-D-xylulose 5-phosphate + CO2. It functions in the pathway metabolic intermediate biosynthesis; 1-deoxy-D-xylulose 5-phosphate biosynthesis; 1-deoxy-D-xylulose 5-phosphate from D-glyceraldehyde 3-phosphate and pyruvate: step 1/1. In terms of biological role, catalyzes the acyloin condensation reaction between C atoms 2 and 3 of pyruvate and glyceraldehyde 3-phosphate to yield 1-deoxy-D-xylulose-5-phosphate (DXP). The sequence is that of 1-deoxy-D-xylulose-5-phosphate synthase from Campylobacter jejuni subsp. doylei (strain ATCC BAA-1458 / RM4099 / 269.97).